A 550-amino-acid chain; its full sequence is Endonuclease/exonuclease/phosphatase family domain-containing protein 1 (550 aa).

The HhH domain maps to 39–68 (ERLNINTATEEELMTLPGVNRGVAQNIVEY). Positions 194-213 (STNTNGGFTHPSPTSFSVQS) are enriched in polar residues. The disordered stretch occupies residues 194-216 (STNTNGGFTHPSPTSFSVQSDEP).

This Danio rerio (Zebrafish) protein is Endonuclease/exonuclease/phosphatase family domain-containing protein 1 (eepd1).